A 231-amino-acid polypeptide reads, in one-letter code: Dihydropteridine reductase (231 aa).

6–30 (LVLGGSGALGAEVVKFFKSKSWNTI) is a binding site for NADP(+). The active-site Proton acceptor is the Tyr138.

This sequence belongs to the short-chain dehydrogenases/reductases (SDR) family. In terms of assembly, homodimer.

The enzyme catalyses 5,6,7,8-tetrahydropteridine + NAD(+) = 6,7-dihydropteridine + NADH + H(+). It catalyses the reaction 5,6,7,8-tetrahydropteridine + NADP(+) = 6,7-dihydropteridine + NADPH + H(+). The product of this enzyme, tetrahydrobiopterin (BH-4), is an essential cofactor for phenylalanine, tyrosine, and tryptophan hydroxylases. The polypeptide is Dihydropteridine reductase (qdpr) (Dictyostelium discoideum (Social amoeba)).